Consider the following 674-residue polypeptide: Zyxin (674 aa).

The disordered stretch occupies residues proline 35–glutamine 447. The span at leucine 86–serine 109 shows a compositional bias: pro residues. Low complexity predominate over residues phenylalanine 110–glycine 120. Composition is skewed to pro residues over residues leucine 121–leucine 148, alanine 162–proline 180, lysine 187–serine 209, lysine 222–alanine 240, and alanine 254–proline 266. Composition is skewed to basic and acidic residues over residues alanine 328–alanine 341 and glutamine 358–arginine 387. LIM zinc-binding domains are found at residues glutamate 481–cysteine 542, cysteine 543–alanine 600, and proline 601–alanine 671.

The protein belongs to the zyxin/ajuba family. Interacts (via LIM2 domain) with hesx1/anf1.

Its subcellular location is the cytoplasm. The protein resides in the cytoskeleton. It localises to the cell junction. It is found in the focal adhesion. Functionally, adhesion plaque protein. May be a component of a signal transduction pathway that mediates adhesion-stimulated changes in gene expression. Suppresses the transcription-repressing activity of hesx1/anf1. In Xenopus tropicalis (Western clawed frog), this protein is Zyxin.